We begin with the raw amino-acid sequence, 285 residues long: Bifunctional protein FolD (285 aa).

Residues 166–168 (GRS), Ser-191, and Ile-232 each bind NADP(+).

It belongs to the tetrahydrofolate dehydrogenase/cyclohydrolase family. In terms of assembly, homodimer.

The catalysed reaction is (6R)-5,10-methylene-5,6,7,8-tetrahydrofolate + NADP(+) = (6R)-5,10-methenyltetrahydrofolate + NADPH. It carries out the reaction (6R)-5,10-methenyltetrahydrofolate + H2O = (6R)-10-formyltetrahydrofolate + H(+). It functions in the pathway one-carbon metabolism; tetrahydrofolate interconversion. Its function is as follows. Catalyzes the oxidation of 5,10-methylenetetrahydrofolate to 5,10-methenyltetrahydrofolate and then the hydrolysis of 5,10-methenyltetrahydrofolate to 10-formyltetrahydrofolate. In Rickettsia typhi (strain ATCC VR-144 / Wilmington), this protein is Bifunctional protein FolD.